The chain runs to 208 residues: 3-isopropylmalate dehydratase small subunit 2 (208 aa).

It belongs to the LeuD family. LeuD type 1 subfamily. Heterodimer of LeuC and LeuD.

It carries out the reaction (2R,3S)-3-isopropylmalate = (2S)-2-isopropylmalate. The protein operates within amino-acid biosynthesis; L-leucine biosynthesis; L-leucine from 3-methyl-2-oxobutanoate: step 2/4. Functionally, catalyzes the isomerization between 2-isopropylmalate and 3-isopropylmalate, via the formation of 2-isopropylmaleate. This Salmonella choleraesuis (strain SC-B67) protein is 3-isopropylmalate dehydratase small subunit 2.